Here is a 303-residue protein sequence, read N- to C-terminus: Ribosomal RNA small subunit methyltransferase H (303 aa).

S-adenosyl-L-methionine-binding positions include 33-35, Asp-52, Phe-79, Asp-97, and Gln-104; that span reads GGH.

The protein belongs to the methyltransferase superfamily. RsmH family.

Its subcellular location is the cytoplasm. The enzyme catalyses cytidine(1402) in 16S rRNA + S-adenosyl-L-methionine = N(4)-methylcytidine(1402) in 16S rRNA + S-adenosyl-L-homocysteine + H(+). In terms of biological role, specifically methylates the N4 position of cytidine in position 1402 (C1402) of 16S rRNA. The polypeptide is Ribosomal RNA small subunit methyltransferase H (Wolinella succinogenes (strain ATCC 29543 / DSM 1740 / CCUG 13145 / JCM 31913 / LMG 7466 / NCTC 11488 / FDC 602W) (Vibrio succinogenes)).